Here is a 451-residue protein sequence, read N- to C-terminus: Zinc finger MYND domain-containing protein 10 homolog (451 aa).

C412, C415, C423, C426, C432, C436, H444, and C448 together coordinate Zn(2+). The segment at 412 to 448 adopts an MYND-type zinc-finger fold; sequence CATCQAKAKKKCACCKKVHYCSRDCQLKDWPQHKLVC.

Belongs to the ZMYND10 family. Specifically expressed in cells with flagella and motile cilia: chordotonal sensory neurons and sperm.

It is found in the cytoplasm. The protein resides in the cell projection. It localises to the cilium. The protein localises to the dynein axonemal particle. Its function is as follows. Plays a role in axonemal structure organization and motility. May be involved in axonemal pre-assembly of inner and outer dynein arms (IDA and ODA, respectively) for proper axoneme building for cilia motility. The chain is Zinc finger MYND domain-containing protein 10 homolog from Drosophila melanogaster (Fruit fly).